An 81-amino-acid polypeptide reads, in one-letter code: Small cysteine-rich protein 1 1 (81 aa).

Residues 1-19 (MGVHFNICLLLLLVATISS) form the signal peptide. Residues 20–39 (QTLKATEKDDSTDENPFGIY) constitute a propeptide that is removed on maturation.

Belongs to the Cnidaria small cysteine-rich protein (SCRiP) family. alpha subfamily. The basic myotoxic domain of rattlesnake crotamine toxins (with 6 Cys residues) has been detected in this protein. However, this protein contains 2 additional Cys at the C-terminal region. Hence, this protein may contain 4 disulfide bonds instead of the 3 suggested by the myotoxin domain.

It localises to the secreted. It is found in the nematocyst. Its function is as follows. Induces neurotoxic symptoms on zebrafish. Has also been claimed to be implied in calcification, but tests on homolog proteins suggest that proteins of this family have a neurotoxic function and not a calcification function. This Montipora capitata (Rice coral) protein is Small cysteine-rich protein 1 1.